The primary structure comprises 171 residues: MDYFTFFGLPARYQLDTQALSLRFQDLQRQYHPDKFASGSQAEQLAAVQQSATINQAWQTLRHPLMRAEYLLSLHGFDLASEQHTVRDTAFLMEQLELREELDEIEQAKDEARLESFIKRVKKMFDTRHQLMVEQLDNEAWDAAADTVRKLRFLDKLRSSAEQLEEKLLDF.

A J domain is found at 2-74 (DYFTFFGLPA…LMRAEYLLSL (73 aa)).

It belongs to the HscB family. Interacts with HscA and stimulates its ATPase activity. Interacts with IscU.

In terms of biological role, co-chaperone involved in the maturation of iron-sulfur cluster-containing proteins. Seems to help targeting proteins to be folded toward HscA. This is Co-chaperone protein HscB from Shigella sonnei (strain Ss046).